A 498-amino-acid chain; its full sequence is ATP synthase subunit beta, chloroplastic (498 aa).

ATP is bound at residue 172–179 (GGAGVGKT).

The protein belongs to the ATPase alpha/beta chains family. In terms of assembly, F-type ATPases have 2 components, CF(1) - the catalytic core - and CF(0) - the membrane proton channel. CF(1) has five subunits: alpha(3), beta(3), gamma(1), delta(1), epsilon(1). CF(0) has four main subunits: a(1), b(1), b'(1) and c(9-12).

It is found in the plastid. Its subcellular location is the chloroplast thylakoid membrane. The enzyme catalyses ATP + H2O + 4 H(+)(in) = ADP + phosphate + 5 H(+)(out). Functionally, produces ATP from ADP in the presence of a proton gradient across the membrane. The catalytic sites are hosted primarily by the beta subunits. In Nicotiana bigelovii (Bigelov's tobacco), this protein is ATP synthase subunit beta, chloroplastic.